A 327-amino-acid chain; its full sequence is MKGKFRFSLKRGLLRPSWNKYNIYNIARKQLPALNNRTLYQKKWNAKKETRSYHGPQLREYQLKNAFRPKLEGVISSLDNKLPIPFMNQTYAFLESRLDMSIHRALFASSALQARQLVLHGKVHVNGKPERRAYRQLLPGDLVTVDQKSVMNCVSASSNNTPSIQDGKQTEQVSSKDGENEKKKDNDDDLFEQTSNGKLPSINETISNFVPKPFMSLMAFIPAYLEVCFRTCSFVYVRDPVARPGLTEVPSPFPEDLHALAYTYYIRSRNMRQGAARCQARRLIPQKVRDASFYQGPPELYKKRNVSPKEAFSHRYPVRQGKLTKLV.

An S4 RNA-binding domain is found at 96 to 154 (SRLDMSIHRALFASSALQARQLVLHGKVHVNGKPERRAYRQLLPGDLVTVDQKSVMNCV). Positions 156-173 (ASSNNTPSIQDGKQTEQV) are enriched in polar residues. Residues 156-199 (ASSNNTPSIQDGKQTEQVSSKDGENEKKKDNDDDLFEQTSNGKL) form a disordered region. The segment covering 174-186 (SSKDGENEKKKDN) has biased composition (basic and acidic residues).

It belongs to the universal ribosomal protein uS4 family. Component of the mitochondrial small ribosomal subunit (mt-SSU). Mature yeast 74S mitochondrial ribosomes consist of a small (37S) and a large (54S) subunit. The 37S small subunit contains a 15S ribosomal RNA (15S mt-rRNA) and at least 32 different proteins. The 54S large subunit contains a 21S rRNA (21S mt-rRNA) and at least 45 different proteins. uS3m, uS4m and uS5m form the narrow entry site of the mRNA channel.

The protein resides in the mitochondrion. Its function is as follows. Component of the mitochondrial ribosome (mitoribosome), a dedicated translation machinery responsible for the synthesis of mitochondrial genome-encoded proteins, including at least some of the essential transmembrane subunits of the mitochondrial respiratory chain. The mitoribosomes are attached to the mitochondrial inner membrane and translation products are cotranslationally integrated into the membrane. This Schizosaccharomyces pombe (strain 972 / ATCC 24843) (Fission yeast) protein is Small ribosomal subunit protein uS4m (nam9).